Consider the following 365-residue polypeptide: tRNA(Met) cytidine acetate ligase (365 aa).

ATP-binding positions include 7-20 (IAEFNPFHNGHKYL), glycine 96, asparagine 152, and arginine 175.

This sequence belongs to the TmcAL family.

Its subcellular location is the cytoplasm. The enzyme catalyses cytidine(34) in elongator tRNA(Met) + acetate + ATP = N(4)-acetylcytidine(34) in elongator tRNA(Met) + AMP + diphosphate. Catalyzes the formation of N(4)-acetylcytidine (ac(4)C) at the wobble position of elongator tRNA(Met), using acetate and ATP as substrates. First activates an acetate ion to form acetyladenylate (Ac-AMP) and then transfers the acetyl group to tRNA to form ac(4)C34. The chain is tRNA(Met) cytidine acetate ligase from Streptococcus pneumoniae (strain ATCC BAA-255 / R6).